We begin with the raw amino-acid sequence, 611 residues long: Dihydroxy-acid dehydratase (611 aa).

Aspartate 81 contacts Mg(2+). Cysteine 122 is a [2Fe-2S] cluster binding site. Mg(2+) contacts are provided by aspartate 123 and lysine 124. An N6-carboxylysine modification is found at lysine 124. Cysteine 195 serves as a coordination point for [2Fe-2S] cluster. Glutamate 491 is a Mg(2+) binding site. Residue serine 517 is the Proton acceptor of the active site.

This sequence belongs to the IlvD/Edd family. As to quaternary structure, homodimer. The cofactor is [2Fe-2S] cluster. Mg(2+) serves as cofactor.

The enzyme catalyses (2R)-2,3-dihydroxy-3-methylbutanoate = 3-methyl-2-oxobutanoate + H2O. It carries out the reaction (2R,3R)-2,3-dihydroxy-3-methylpentanoate = (S)-3-methyl-2-oxopentanoate + H2O. Its pathway is amino-acid biosynthesis; L-isoleucine biosynthesis; L-isoleucine from 2-oxobutanoate: step 3/4. The protein operates within amino-acid biosynthesis; L-valine biosynthesis; L-valine from pyruvate: step 3/4. In terms of biological role, functions in the biosynthesis of branched-chain amino acids. Catalyzes the dehydration of (2R,3R)-2,3-dihydroxy-3-methylpentanoate (2,3-dihydroxy-3-methylvalerate) into 2-oxo-3-methylpentanoate (2-oxo-3-methylvalerate) and of (2R)-2,3-dihydroxy-3-methylbutanoate (2,3-dihydroxyisovalerate) into 2-oxo-3-methylbutanoate (2-oxoisovalerate), the penultimate precursor to L-isoleucine and L-valine, respectively. The polypeptide is Dihydroxy-acid dehydratase (Actinobacillus pleuropneumoniae serotype 5b (strain L20)).